A 203-amino-acid chain; its full sequence is Urease accessory protein UreG (203 aa).

10 to 17 (GPVGAGKT) serves as a coordination point for GTP.

Belongs to the SIMIBI class G3E GTPase family. UreG subfamily. Homodimer. UreD, UreF and UreG form a complex that acts as a GTP-hydrolysis-dependent molecular chaperone, activating the urease apoprotein by helping to assemble the nickel containing metallocenter of UreC. The UreE protein probably delivers the nickel.

Its subcellular location is the cytoplasm. Functionally, facilitates the functional incorporation of the urease nickel metallocenter. This process requires GTP hydrolysis, probably effectuated by UreG. The protein is Urease accessory protein UreG of Lachnoclostridium phytofermentans (strain ATCC 700394 / DSM 18823 / ISDg) (Clostridium phytofermentans).